A 108-amino-acid polypeptide reads, in one-letter code: Latartoxin-2c (108 aa).

The N-terminal stretch at 1-19 is a signal peptide; that stretch reads MKVLVITALCFILLQNVLG. Residues 20–42 constitute a propeptide, removed in mature form; that stretch reads EDTYEDLQNYIENLINENQDEAR. The Processing quadruplet motif signature appears at 39-42; the sequence is DEAR. 4 disulfide bridges follow: C44–C61, C51–C72, C60–C84, and C74–C82. Position 107 is an isoleucine amide (I107).

This sequence belongs to the neurotoxin 19 (CSTX) family. 11 (latartoxin) subfamily. In terms of processing, contains 4 disulfide bonds. Post-translationally, cleavage of the propeptide depends on the processing quadruplet motif (XXXR, with at least one of X being E). In terms of tissue distribution, expressed by the venom gland.

The protein localises to the secreted. In terms of biological role, insect toxin. The protein is Latartoxin-2c of Lachesana tarabaevi (Spider).